A 782-amino-acid chain; its full sequence is E3 ubiquitin-protein ligase SopA (782 aa).

Residues 137 to 171 form a disordered region; it reads VSVSANNRPTVSEGRTPPVSPSLSLQATSSPSSPA. Residues 157–171 are compositionally biased toward low complexity; sequence PSLSLQATSSPSSPA. Cys753 serves as the catalytic Glycyl thioester intermediate.

Belongs to the SopA E3 ligase family. Ubiquitinated in the presence of host E1 ubiquitin-activating enzyme, E2 ubiquitin-conjugating enzyme and ubiquitin.

Its subcellular location is the secreted. It localises to the host cell. The catalysed reaction is S-ubiquitinyl-[E2 ubiquitin-conjugating enzyme]-L-cysteine + [acceptor protein]-L-lysine = [E2 ubiquitin-conjugating enzyme]-L-cysteine + N(6)-ubiquitinyl-[acceptor protein]-L-lysine.. In terms of biological role, effector proteins function to alter host cell physiology and promote bacterial survival in host tissues. This protein is an E3 ubiquitin ligase that interferes with host's ubiquitination pathway. This chain is E3 ubiquitin-protein ligase SopA (sopA), found in Salmonella newport (strain SL254).